Consider the following 290-residue polypeptide: Prepilin leader peptidase/N-methyltransferase (290 aa).

Residues 14 to 34 (LYFSLVFLFSLMIGSFLNVVI) traverse the membrane as a helical segment. Zn(2+) contacts are provided by Cys-74, Cys-77, Cys-99, and Cys-102. 6 helical membrane passes run 106 to 126 (ISAR…AVAM), 130 to 150 (PGWG…LTFI), 161 to 181 (LTLP…FVSL), 185 to 205 (VIGA…FKLL), 232 to 252 (PIVL…LILL), and 261 to 281 (IPFG…GDSI).

It belongs to the peptidase A24 family. Zn(2+) is required as a cofactor.

It localises to the cell inner membrane. It carries out the reaction Typically cleaves a -Gly-|-Phe- bond to release an N-terminal, basic peptide of 5-8 residues from type IV prepilin, and then N-methylates the new N-terminal amino group, the methyl donor being S-adenosyl-L-methionine.. In terms of biological role, plays an essential role in type IV pili and type II pseudopili formation by proteolytically removing the leader sequence from substrate proteins and subsequently monomethylating the alpha-amino group of the newly exposed N-terminal phenylalanine. The chain is Prepilin leader peptidase/N-methyltransferase (tapD) from Aeromonas hydrophila.